Reading from the N-terminus, the 374-residue chain is Chaperone protein DnaJ (374 aa).

In terms of domain architecture, J spans 5–70 (DYYEVLGVER…SKRAAFDQYG (66 aa)). The segment at 133–211 (GTTVSIRVPT…CHGEGRVEEY (79 aa)) adopts a CR-type zinc-finger fold. The Zn(2+) site is built by Cys146, Cys149, Cys163, Cys166, Cys185, Cys188, Cys199, and Cys202. CXXCXGXG motif repeat units follow at residues 146–153 (CQPCDGSG), 163–170 (CPTCGGIG), 185–192 (CPRCHGQG), and 199–206 (CTSCHGEG).

This sequence belongs to the DnaJ family. Homodimer. Zn(2+) is required as a cofactor.

It localises to the cytoplasm. Its function is as follows. Participates actively in the response to hyperosmotic and heat shock by preventing the aggregation of stress-denatured proteins and by disaggregating proteins, also in an autonomous, DnaK-independent fashion. Unfolded proteins bind initially to DnaJ; upon interaction with the DnaJ-bound protein, DnaK hydrolyzes its bound ATP, resulting in the formation of a stable complex. GrpE releases ADP from DnaK; ATP binding to DnaK triggers the release of the substrate protein, thus completing the reaction cycle. Several rounds of ATP-dependent interactions between DnaJ, DnaK and GrpE are required for fully efficient folding. Also involved, together with DnaK and GrpE, in the DNA replication of plasmids through activation of initiation proteins. The chain is Chaperone protein DnaJ from Pseudomonas putida (strain GB-1).